The primary structure comprises 966 residues: MAKGFYISKSLGILGILLGVAALCTIVALSVVYRQEKNKNTSQSPSMAPLNPTATSSPATTLDQNLPWNRYRLPKTLIPDSYNVVLRPYLSPNSQGLYIFTGSSTVRFTCQEATNVIIIHSKKLNYTITQGHRVVLRGVRGSQPPAIASTELVELTEYLVVHLQGQLVAGSQYEMDTQFQGELADDLAGFYRSEYMEGNVRKVVATTQMQAADARKSFPCFDEPAMKATFNITPIHPRDYTALSNMLPRSSTALPEDPNWTVTEFHTTPKMSTYLLAYIVSEFTNIEAQSPNNVQIRIWARPSAISEGHGQYALNVTGPILNFFANHYNTPYPLEKSDQIGLPDFNAGAMENWGLVTYRESALLFDPLVSSISNKERVVTVVAHELAHQWFGNLVTVDWWNDLWLNEGFASYVEYLGADYAEPTWNLKDLIVLNELHSVMAVDALASSHPLSSPADEVNTPAQISELFDSITYSKGASVLRMLSSFLTEDLFKEGLASYLHTFAYQNTIYLDLWEHLQQAVNSQSAIQLPASVRDIMDRWILQMGFPVVTVNTTNGIISQHHFLLDPTSNVTRPSDFNYLWIVPVSSMRNGVLEQEFWLEGVEQTQNSLFRVEGDNNWILANLNVTGYYQVNYDEGNWKKLQTQLQTNPSVIPVINRAQIIHDAFNLASAQKVPVTLALDNTLFLIRETEYMPWQAALSSLNYFKLMFDRSEVYGPMKNYLSKQVRPLFEHFKNITNDWTRRPDTLMDQYNEINAISTACSNGIQECETLVSDLFKQWMDDPSNNPIHPNLRTTVYCNAIALGGEREWDFAWEQFRNATLVNEADKLRSALACSNEVWILNRYLSYTLNPDYIRRQDATSTINSIASNVIGQTLVWDFVQSNWKKLFEDFGGGSFSFANLIRAVTRRFSTEYELQQLEQFRLNNLDTGFGSGTRALEQALEQTRANIKWVQENKEAVLAWFTANSA.

Residues 1–8 (MAKGFYIS) lie on the Cytoplasmic side of the membrane. Residues 9 to 32 (KSLGILGILLGVAALCTIVALSVV) form a helical; Signal-anchor for type II membrane protein membrane-spanning segment. The tract at residues 33-65 (YRQEKNKNTSQSPSMAPLNPTATSSPATTLDQN) is cytosolic Ser/Thr-rich junction. At 33–966 (YRQEKNKNTS…VLAWFTANSA (934 aa)) the chain is on the extracellular side. N-linked (GlcNAc...) asparagine glycans are attached at residues asparagine 40 and asparagine 125. Residues 40–61 (NTSQSPSMAPLNPTATSSPATT) form a disordered region. The segment at 66–966 (LPWNRYRLPK…VLAWFTANSA (901 aa)) is metalloprotease. Tyrosine 173 bears the Sulfotyrosine mark. N-linked (GlcNAc...) asparagine glycosylation is found at asparagine 259 and asparagine 315. 348 to 352 (GAMEN) lines the substrate pocket. Histidine 384 contributes to the Zn(2+) binding site. The Proton acceptor role is filled by glutamate 385. Zn(2+)-binding residues include histidine 388 and glutamate 407. Tyrosine 415 and tyrosine 420 each carry sulfotyrosine. Asparagine 552, asparagine 570, asparagine 624, and asparagine 734 each carry an N-linked (GlcNAc...) asparagine glycan. 2 cysteine pairs are disulfide-bonded: cysteine 760–cysteine 767 and cysteine 797–cysteine 833. Residue asparagine 817 is glycosylated (N-linked (GlcNAc...) asparagine). Phosphotyrosine is present on tyrosine 852. Residue tyrosine 912 is modified to Sulfotyrosine.

This sequence belongs to the peptidase M1 family. In terms of assembly, homodimer. Interacts with SLC6A19. Requires Zn(2+) as cofactor. Sulfated. Post-translationally, N- and O-glycosylated. In terms of processing, may undergo proteolysis and give rise to a soluble form.

It is found in the cell membrane. It catalyses the reaction Release of an N-terminal amino acid, Xaa-|-Yaa- from a peptide, amide or arylamide. Xaa is preferably Ala, but may be most amino acids including Pro (slow action). When a terminal hydrophobic residue is followed by a prolyl residue, the two may be released as an intact Xaa-Pro dipeptide.. Its function is as follows. Broad specificity aminopeptidase which plays a role in the final digestion of peptides generated from hydrolysis of proteins by gastric and pancreatic proteases. Also involved in the processing of various peptides including peptide hormones, such as angiotensin III and IV, neuropeptides, and chemokines. May also be involved the cleavage of peptides bound to major histocompatibility complex class II molecules of antigen presenting cells. May have a role in angiogenesis and promote cholesterol crystallization. May have a role in amino acid transport by acting as binding partner of amino acid transporter SLC6A19 and regulating its activity. This Oryctolagus cuniculus (Rabbit) protein is Aminopeptidase N (ANPEP).